The sequence spans 120 residues: MKTQREKSVRRAQRNRIRLRKFANGRPRLSVYRSSKNIYAQIIDDASGKTVVAASSLEEAAQKEHGKGWDTKAAELVGKLIAERAVKEGVKDVVFDRGGYIFHGRVKALAEAAREGGLNF.

This sequence belongs to the universal ribosomal protein uL18 family. As to quaternary structure, part of the 50S ribosomal subunit; part of the 5S rRNA/L5/L18/L25 subcomplex. Contacts the 5S and 23S rRNAs.

Functionally, this is one of the proteins that bind and probably mediate the attachment of the 5S RNA into the large ribosomal subunit, where it forms part of the central protuberance. The polypeptide is Large ribosomal subunit protein uL18 (Maricaulis maris (strain MCS10) (Caulobacter maris)).